The chain runs to 361 residues: Pyruvate dehydrogenase E1 component subunit beta, mitochondrial (361 aa).

Residues 1–27 constitute a mitochondrion transit peptide; sequence MAVNGCMRLLRNGLTSACALEQSVRRL. Position 90 (Glu90) interacts with thiamine diphosphate. 5 residues coordinate K(+): Ile143, Ala191, Val192, Asp194, and Asn196.

Heterotetramer of two PDHA1 and two PDHB subunits. The heterotetramer interacts with DLAT, and is part of the multimeric pyruvate dehydrogenase complex that contains multiple copies of pyruvate dehydrogenase (E1), dihydrolipoamide acetyltransferase (DLAT, E2) and lipoamide dehydrogenase (DLD, E3). It depends on thiamine diphosphate as a cofactor.

The protein localises to the mitochondrion matrix. The enzyme catalyses N(6)-[(R)-lipoyl]-L-lysyl-[protein] + pyruvate + H(+) = N(6)-[(R)-S(8)-acetyldihydrolipoyl]-L-lysyl-[protein] + CO2. Its function is as follows. The pyruvate dehydrogenase complex catalyzes the overall conversion of pyruvate to acetyl-CoA and CO(2), and thereby links the glycolytic pathway to the tricarboxylic cycle. The polypeptide is Pyruvate dehydrogenase E1 component subunit beta, mitochondrial (Ascaris suum (Pig roundworm)).